Reading from the N-terminus, the 71-residue chain is UPF0434 protein Csal_1588 (71 aa).

This sequence belongs to the UPF0434 family.

The polypeptide is UPF0434 protein Csal_1588 (Chromohalobacter salexigens (strain ATCC BAA-138 / DSM 3043 / CIP 106854 / NCIMB 13768 / 1H11)).